Reading from the N-terminus, the 278-residue chain is Undecaprenyl-diphosphatase (278 aa).

8 consecutive transmembrane segments (helical) span residues 3 to 23, 42 to 62, 88 to 108, 112 to 132, 152 to 172, 190 to 210, 225 to 245, and 253 to 273; these read YILIGVILGIVQGISEWIPIS, VAYSFGLFMEIGTIAAAIIYF, FLVIVTIITGLMGVPLYLFVI, ILGLPMTVLGVVLLTDGIIIY, IIIVGIAQGLAALPGVSRSGI, LSFISLIPAALGAIGVTVLFS, GLLISIVVATFVSIFFINALL, and VVVLVIILGIIAIISGILSGI.

Belongs to the UppP family.

It is found in the cell membrane. It catalyses the reaction di-trans,octa-cis-undecaprenyl diphosphate + H2O = di-trans,octa-cis-undecaprenyl phosphate + phosphate + H(+). Its function is as follows. Catalyzes the dephosphorylation of undecaprenyl diphosphate (UPP). This Saccharolobus islandicus (strain M.14.25 / Kamchatka #1) (Sulfolobus islandicus) protein is Undecaprenyl-diphosphatase.